Reading from the N-terminus, the 292-residue chain is Bifunctional protein FolD (292 aa).

NADP(+)-binding positions include 166–168 (GRS), serine 191, and isoleucine 232.

Belongs to the tetrahydrofolate dehydrogenase/cyclohydrolase family. Homodimer.

The enzyme catalyses (6R)-5,10-methylene-5,6,7,8-tetrahydrofolate + NADP(+) = (6R)-5,10-methenyltetrahydrofolate + NADPH. The catalysed reaction is (6R)-5,10-methenyltetrahydrofolate + H2O = (6R)-10-formyltetrahydrofolate + H(+). It functions in the pathway one-carbon metabolism; tetrahydrofolate interconversion. Its function is as follows. Catalyzes the oxidation of 5,10-methylenetetrahydrofolate to 5,10-methenyltetrahydrofolate and then the hydrolysis of 5,10-methenyltetrahydrofolate to 10-formyltetrahydrofolate. This Wolbachia sp. subsp. Drosophila simulans (strain wRi) protein is Bifunctional protein FolD.